Consider the following 423-residue polypeptide: Keratin, type I cytoskeletal 18 (423 aa).

At Ser-2 the chain carries N-acetylserine. A head region spans residues Ser-2–Thr-71. Phosphoserine is present on residues Ser-7, Ser-11, Ser-16, and Ser-19. Ser-31 and Ser-32 each carry phosphoserine; alternate. O-linked (GlcNAc) serine; alternate glycosylation is found at Ser-31 and Ser-32. Phosphoserine is present on Ser-35. Residue Tyr-37 is modified to Phosphotyrosine. At Ser-43 the chain carries Phosphoserine. Arg-46 bears the Omega-N-methylarginine mark. The residue at position 50 (Ser-50) is a Phosphoserine; alternate. O-linked (GlcNAc) serine; alternate glycosylation is present at Ser-50. A Phosphoserine; by MAPKAPK2 and MAPKAPK3 modification is found at Ser-52. Phosphoserine occurs at positions 57 and 60. The interval Gly-62–Leu-366 is necessary for interaction with PNN. Residues Val-69 to His-121 are interaction with TRADD. Residues Glu-72–Tyr-107 are coil 1A. The 313-residue stretch at Glu-72–Ser-384 folds into the IF rod domain. Lys-73 is covalently cross-linked (Glycyl lysine isopeptide (Lys-Gly) (interchain with G-Cter in SUMO2)). Phosphoserine is present on Ser-85. The tract at residues Leu-108–Thr-125 is linker 1. Residue Lys-124 is modified to N6-acetyllysine. A coil 1B region spans residues Ile-126–Leu-217. Residues Ser-137 and Ser-170 each carry the phosphoserine modification. Residues Glu-218 to Ile-241 are linker 12. The segment at Gln-236–Ser-384 is interaction with DNAJB6. Lys-240 participates in a covalent cross-link: Glycyl lysine isopeptide (Lys-Gly) (interchain with G-Cter in SUMO2). Positions Met-242–Gly-380 are coil 2. Thr-295 is modified (phosphothreonine). Residues Lys-363 and Lys-365 each participate in a glycyl lysine isopeptide (Lys-Gly) (interchain with G-Cter in SUMO2) cross-link. Residues Asp-381 to His-423 are tail. Residues Ser-384, Ser-391, Ser-392, and Ser-394 each carry the phosphoserine modification. Thr-397 is modified (phosphothreonine). Residue Lys-410 forms a Glycyl lysine isopeptide (Lys-Gly) (interchain with G-Cter in SUMO2) linkage.

The protein belongs to the intermediate filament family. As to quaternary structure, heterotetramer of two type I and two type II keratins. KRT18 associates with KRT8. Interacts with PNN and mutated CFTR. Interacts with YWHAE, YWHAH and YWHAZ only when phosphorylated. Interacts with DNAJB6, TCHP and TRADD. Interacts with the thrombin-antithrombin complex. Interacts with FAM83H. Interacts with EPPK1. Interacts with PKP1 and PKP2. In terms of processing, phosphorylation increases by IL-6. Post-translationally, proteolytically cleaved by caspases during epithelial cell apoptosis. Cleavage occurs at Asp-231 by either caspase-3, caspase-6 or caspase-7. Dephosphorylated by ethanol. In terms of processing, O-GlcNAcylation increases solubility, and decreases stability by inducing proteasomal degradation. As to expression, expressed on the plasma membrane of hepatocytes and in the narrow apical portions of supporting cells in the vomeronasal sensory epithelium. Detected in the type III alveolar cells of the lung, in the proliferative crypt epithelium of the small intestine and in the older intragemmal cells of the tongue.

The protein localises to the nucleus matrix. It localises to the cytoplasm. The protein resides in the perinuclear region. It is found in the nucleus. Its subcellular location is the nucleolus. In terms of biological role, when phosphorylated, plays a role in filament reorganization. Involved in the delivery of mutated CFTR to the plasma membrane. Together with KRT8, is involved in interleukin-6 (IL-6)-mediated barrier protection. Involved in the uptake of thrombin-antithrombin complexes by hepatic cells. In Rattus norvegicus (Rat), this protein is Keratin, type I cytoskeletal 18.